The following is a 365-amino-acid chain: Testis-specific serine/threonine-protein kinase 1 (365 aa).

One can recognise a Protein kinase domain in the interval 12–272 (YIMGINLGEG…IDEILNHCWV (261 aa)). Residues 18-26 (LGEGSYAKV) and Lys41 each bind ATP. The active-site Proton acceptor is the Asp136. Thr174 bears the Phosphothreonine mark. The disordered stretch occupies residues 282–365 (GAINKEGESS…HPQQPSETHT (84 aa)). Residues 303 to 330 (GADKKSATKLEPREEARSEARSESKPQE) show a composition bias toward basic and acidic residues. Positions 331-347 (DTLQVVRQSENVGLSSE) are enriched in polar residues.

This sequence belongs to the protein kinase superfamily. CAMK Ser/Thr protein kinase family. Interacts with TSSK2. Interacts with HSP90; this interaction stabilizes TSSK1. The cofactor is Mg(2+). In terms of processing, autophosphorylated. Post-translationally, ubiquitinated; HSP90 activity negatively regulates ubiquitination and degradation. Testis-specific. Expressed only in postmeiotic spermatids at the final stages of cytodifferentiation in the seminiferous tubules (at protein level). Not detected in released sperms in the lumen of the seminiferous tubules and the epididymis.

Its subcellular location is the cytoplasm. It is found in the cytoplasmic vesicle. It localises to the secretory vesicle. The protein localises to the acrosome. The protein resides in the cell projection. Its subcellular location is the cilium. It is found in the flagellum. The enzyme catalyses L-seryl-[protein] + ATP = O-phospho-L-seryl-[protein] + ADP + H(+). It carries out the reaction L-threonyl-[protein] + ATP = O-phospho-L-threonyl-[protein] + ADP + H(+). Activated by phosphorylation on Thr-174, potentially by autophosphorylation. Functionally, testis-specific serine/threonine-protein kinase required during spermatid development. Phosphorylates 'Ser-281' of TSKS. Involved in the late stages of spermatogenesis, during the reconstruction of the cytoplasm. During spermatogenesis, required for the transformation of a ring-shaped structure around the base of the flagellum originating from the chromatoid body. This is Testis-specific serine/threonine-protein kinase 1 (Tssk1b) from Mus musculus (Mouse).